The chain runs to 910 residues: Protein translocase subunit SecA (910 aa).

ATP-binding positions include Gln87, 105–109 (GEGKT), and Asp508. Residues 848 to 910 (RLSQSQFQHQ…KYKHCHGQLS (63 aa)) are disordered. Over residues 869 to 880 (AQVQAAQQGVAQ) the composition is skewed to low complexity. 4 residues coordinate Zn(2+): Cys894, Cys896, Cys905, and His906. The segment covering 900–910 (KKYKHCHGQLS) has biased composition (basic residues).

This sequence belongs to the SecA family. As to quaternary structure, monomer and homodimer. Part of the essential Sec protein translocation apparatus which comprises SecA, SecYEG and auxiliary proteins SecDF-YajC and YidC. Zn(2+) is required as a cofactor.

The protein resides in the cell inner membrane. The protein localises to the cytoplasm. It carries out the reaction ATP + H2O + cellular proteinSide 1 = ADP + phosphate + cellular proteinSide 2.. Its function is as follows. Part of the Sec protein translocase complex. Interacts with the SecYEG preprotein conducting channel. Has a central role in coupling the hydrolysis of ATP to the transfer of proteins into and across the cell membrane, serving both as a receptor for the preprotein-SecB complex and as an ATP-driven molecular motor driving the stepwise translocation of polypeptide chains across the membrane. The protein is Protein translocase subunit SecA of Stenotrophomonas maltophilia (strain K279a).